Consider the following 191-residue polypeptide: Adenine phosphoribosyltransferase 5 (191 aa).

The protein belongs to the purine/pyrimidine phosphoribosyltransferase family. Homodimer.

The protein resides in the cytoplasm. It carries out the reaction AMP + diphosphate = 5-phospho-alpha-D-ribose 1-diphosphate + adenine. Its pathway is purine metabolism; AMP biosynthesis via salvage pathway; AMP from adenine: step 1/1. In terms of biological role, catalyzes a salvage reaction resulting in the formation of AMP, that is energically less costly than de novo synthesis. May contribute to the recycling of adenine into adenylate nucleotides and the inactivation of cytokinins by phosphoribosylation. Possesses low activity toward adenine, but can efficiently convert cytokinins from free bases (active form) to the corresponding nucleotides (inactive form). This is Adenine phosphoribosyltransferase 5 (APT5) from Arabidopsis thaliana (Mouse-ear cress).